The sequence spans 336 residues: D-alanine--D-alanine ligase (336 aa).

Residues 124–330 form the ATP-grasp domain; that stretch reads KMWFSALGIP…FTEYLSLVIK (207 aa). Position 154-209 (154-209) interacts with ATP; sequence ALENWGSIFVKAASQGSSVGCYKVDDSSKVAGVLKDAFGYAPYVIVEKTIKARELE. Mg(2+)-binding residues include Asp284, Glu297, and Asn299.

This sequence belongs to the D-alanine--D-alanine ligase family. The cofactor is Mg(2+). Mn(2+) serves as cofactor.

It is found in the cytoplasm. It carries out the reaction 2 D-alanine + ATP = D-alanyl-D-alanine + ADP + phosphate + H(+). It participates in cell wall biogenesis; peptidoglycan biosynthesis. Its function is as follows. Cell wall formation. In Shewanella sp. (strain MR-7), this protein is D-alanine--D-alanine ligase.